A 523-amino-acid chain; its full sequence is Translation initiation factor eIF2B subunit delta (523 aa).

Positions 1–147 (MAAVAVAVRE…PSGVKRLPEY (147 aa)) are disordered. A2 carries the N-acetylalanine modification. A Phosphoserine modification is found at S12. Basic and acidic residues predominate over residues 30-40 (EMTKEEKLQLR). A compositionally biased stretch (basic residues) spans 41 to 51 (KEKKQQKKKRK). T86 carries the phosphothreonine modification. Over residues 87-121 (PREKVPAGRSKAELRAERRAKQEAERALKQARKGE) the composition is skewed to basic and acidic residues. Phosphoserine is present on S130. The segment at 170-179 (RKDYGSKVSL) is may bind the chemical integrated stress response (ISR) inhibitor ISRIB.

The protein belongs to the eIF-2B alpha/beta/delta subunits family. Component of the translation initiation factor 2B (eIF2B) complex which is a heterodecamer of two sets of five different subunits: alpha, beta, gamma, delta and epsilon. Subunits alpha, beta and delta comprise a regulatory subcomplex and subunits epsilon and gamma comprise a catalytic subcomplex. Within the complex, the hexameric regulatory complex resides at the center, with the two heterodimeric catalytic subcomplexes bound on opposite sides.

The protein localises to the cytoplasm. It is found in the cytosol. Its activity is regulated as follows. Activated by the chemical integrated stress response (ISR) inhibitor ISRIB which stimulates guanine nucleotide exchange factor activity for both phosphorylated and unphosphorylated eIF2. Functionally, acts as a component of the translation initiation factor 2B (eIF2B) complex, which catalyzes the exchange of GDP for GTP on eukaryotic initiation factor 2 (eIF2) gamma subunit. Its guanine nucleotide exchange factor activity is repressed when bound to eIF2 complex phosphorylated on the alpha subunit, thereby limiting the amount of methionyl-initiator methionine tRNA available to the ribosome and consequently global translation is repressed. This chain is Translation initiation factor eIF2B subunit delta (EIF2B4), found in Homo sapiens (Human).